The primary structure comprises 1014 residues: Klotho (1014 aa).

A signal peptide spans Met1 to Ser34. Over Ala35–Ser983 the chain is Extracellular. Glycosyl hydrolase-1 regions lie at residues Leu59–Phe508 and Leu517–Phe955. N-linked (GlcNAc...) asparagine glycosylation is found at Asn161, Asn285, Asn346, Asn609, Asn614, and Asn696. A helical membrane pass occupies residues Leu984 to Tyr1004. Residues Tyr1005–Lys1014 are Cytoplasmic-facing.

The protein belongs to the glycosyl hydrolase 1 family. Klotho subfamily. As to quaternary structure, homodimer. Interacts with FGF23 and FGFR1. Post-translationally, N-glycosylated. In terms of tissue distribution, present in cortical renal tubules and the parathyroid (at protein level). Strongly expressed in kidney. Expressed at low levels in brain, lung, intestine and ovaries.

The protein localises to the cell membrane. The protein resides in the apical cell membrane. It localises to the secreted. It carries out the reaction a beta-D-glucuronoside + H2O = D-glucuronate + an alcohol. In terms of biological role, may have weak glycosidase activity towards glucuronylated steroids. However, it lacks essential active site Glu residues at positions 241 and 874, suggesting it may be inactive as a glycosidase in vivo. May be involved in the regulation of calcium and phosphorus homeostasis by inhibiting the synthesis of active vitamin D. Essential factor for the specific interaction between FGF23 and FGFR1. The Klotho peptide generated by cleavage of the membrane-bound isoform may be an anti-aging circulating hormone which would extend life span by inhibiting insulin/IGF1 signaling. The polypeptide is Klotho (Kl) (Rattus norvegicus (Rat)).